The primary structure comprises 175 residues: NAD(P)H-quinone oxidoreductase subunit I, chloroplastic (175 aa).

4Fe-4S ferredoxin-type domains are found at residues 55-84 and 95-124; these read GRIH…VNWE and QTYS…MTEE. Positions 64, 67, 70, 74, 104, 107, 110, and 114 each coordinate [4Fe-4S] cluster.

It belongs to the complex I 23 kDa subunit family. As to quaternary structure, NDH is composed of at least 16 different subunits, 5 of which are encoded in the nucleus. [4Fe-4S] cluster is required as a cofactor.

Its subcellular location is the plastid. The protein localises to the chloroplast thylakoid membrane. It carries out the reaction a plastoquinone + NADH + (n+1) H(+)(in) = a plastoquinol + NAD(+) + n H(+)(out). The catalysed reaction is a plastoquinone + NADPH + (n+1) H(+)(in) = a plastoquinol + NADP(+) + n H(+)(out). NDH shuttles electrons from NAD(P)H:plastoquinone, via FMN and iron-sulfur (Fe-S) centers, to quinones in the photosynthetic chain and possibly in a chloroplast respiratory chain. The immediate electron acceptor for the enzyme in this species is believed to be plastoquinone. Couples the redox reaction to proton translocation, and thus conserves the redox energy in a proton gradient. The sequence is that of NAD(P)H-quinone oxidoreductase subunit I, chloroplastic from Chlorokybus atmophyticus (Soil alga).